The primary structure comprises 440 residues: Deoxyguanosinetriphosphate triphosphohydrolase-like protein (440 aa).

The HD domain occupies 61–256 (RLIHSLEVSC…MEAADDLCYS (196 aa)).

The protein belongs to the dGTPase family. Type 3 subfamily.

This chain is Deoxyguanosinetriphosphate triphosphohydrolase-like protein, found in Synechocystis sp. (strain ATCC 27184 / PCC 6803 / Kazusa).